A 93-amino-acid polypeptide reads, in one-letter code: Putative protein adenylyltransferase MJ0435 (93 aa).

The GSX(10)DXD motif motif lies at 26–40 (GSYARNEQKETSDID). The Mg(2+) site is built by aspartate 38, aspartate 40, and aspartate 70.

This sequence belongs to the MntA antitoxin family. In terms of assembly, probably forms a complex with cognate toxin MJ0434. Mg(2+) serves as cofactor.

It carries out the reaction L-tyrosyl-[protein] + ATP = O-(5'-adenylyl)-L-tyrosyl-[protein] + diphosphate. The catalysed reaction is O-(5'-adenylyl)-L-tyrosyl-[protein] + ATP = O-[5'-(adenylyl-(5'-&gt;3')-adenylyl)]-L-tyrosyl-[protein] + diphosphate. In terms of biological role, probable antitoxin component of a putative type VII toxin-antitoxin (TA) system. Neutralizes cognate toxic MJ0434 by di-AMPylation. The protein is Putative protein adenylyltransferase MJ0435 of Methanocaldococcus jannaschii (strain ATCC 43067 / DSM 2661 / JAL-1 / JCM 10045 / NBRC 100440) (Methanococcus jannaschii).